The sequence spans 181 residues: Large ribosomal subunit protein uL10 (181 aa).

This sequence belongs to the universal ribosomal protein uL10 family. In terms of assembly, part of the ribosomal stalk of the 50S ribosomal subunit. The N-terminus interacts with L11 and the large rRNA to form the base of the stalk. The C-terminus forms an elongated spine to which L12 dimers bind in a sequential fashion forming a multimeric L10(L12)X complex.

Functionally, forms part of the ribosomal stalk, playing a central role in the interaction of the ribosome with GTP-bound translation factors. The polypeptide is Large ribosomal subunit protein uL10 (Trichormus variabilis (strain ATCC 29413 / PCC 7937) (Anabaena variabilis)).